A 274-amino-acid polypeptide reads, in one-letter code: MQQLQNVIETAFERRADITPANVDTVTREAITHVIDLLDTGALRVAEKIDGQWVTHQWLKKAVLLSFRINDNQVMEGAETRYYDKVPMKFAGYDEARFQHEGFRVVPPATVRKGAFIARNTVLMPSYVNIGAFVDEGTMVDTWATVGSCAQIGKNVHLSGGVGIGGVLEPLQANPTIIEDNCFVGARSEVVEGVIVEEGSVISMGVFIGQSTRIYDRETGEVHYGRVPAGSVVVSGNLPSKDGSYSLYCAVIVKKVDAKTRSKVGINELLRTID.

It belongs to the transferase hexapeptide repeat family.

It localises to the cytoplasm. The enzyme catalyses (S)-2,3,4,5-tetrahydrodipicolinate + succinyl-CoA + H2O = (S)-2-succinylamino-6-oxoheptanedioate + CoA. Its pathway is amino-acid biosynthesis; L-lysine biosynthesis via DAP pathway; LL-2,6-diaminopimelate from (S)-tetrahydrodipicolinate (succinylase route): step 1/3. The sequence is that of 2,3,4,5-tetrahydropyridine-2,6-dicarboxylate N-succinyltransferase from Yersinia pseudotuberculosis serotype IB (strain PB1/+).